A 340-amino-acid polypeptide reads, in one-letter code: Cytochrome c peroxidase, mitochondrial (340 aa).

The N-terminal 17 residues, 1–17 (MRSFRAVRNFSTTAKRL), are a transit peptide targeting the mitochondrion. His-101 serves as the catalytic Proton acceptor. Residues 175-198 (WKRGRVDEPESASPPDGSLPDASQ) form a disordered region. His-224 lines the heme b pocket. The Tryptophan radical intermediate role is filled by Trp-240.

It belongs to the peroxidase family. Cytochrome c peroxidase subfamily. In terms of assembly, forms a one-to-one complex with cytochrome c. Heme b serves as cofactor.

It is found in the mitochondrion matrix. Its subcellular location is the mitochondrion intermembrane space. The enzyme catalyses 2 Fe(II)-[cytochrome c] + H2O2 + 2 H(+) = 2 Fe(III)-[cytochrome c] + 2 H2O. Functionally, destroys radicals which are normally produced within the cells and which are toxic to biological systems. This Yarrowia lipolytica (strain CLIB 122 / E 150) (Yeast) protein is Cytochrome c peroxidase, mitochondrial (CCP1).